Reading from the N-terminus, the 122-residue chain is Large ribosomal subunit protein uL14 (122 aa).

Belongs to the universal ribosomal protein uL14 family. In terms of assembly, part of the 50S ribosomal subunit. Forms a cluster with proteins L3 and L19. In the 70S ribosome, L14 and L19 interact and together make contacts with the 16S rRNA in bridges B5 and B8.

Functionally, binds to 23S rRNA. Forms part of two intersubunit bridges in the 70S ribosome. In Streptococcus thermophilus (strain CNRZ 1066), this protein is Large ribosomal subunit protein uL14.